Consider the following 189-residue polypeptide: Peptidyl-tRNA hydrolase (189 aa).

Residue Y14 coordinates tRNA. The Proton acceptor role is filled by H19. The tRNA site is built by Y64, N66, and N112.

Belongs to the PTH family. Monomer.

The protein resides in the cytoplasm. The enzyme catalyses an N-acyl-L-alpha-aminoacyl-tRNA + H2O = an N-acyl-L-amino acid + a tRNA + H(+). Functionally, hydrolyzes ribosome-free peptidyl-tRNAs (with 1 or more amino acids incorporated), which drop off the ribosome during protein synthesis, or as a result of ribosome stalling. In terms of biological role, catalyzes the release of premature peptidyl moieties from peptidyl-tRNA molecules trapped in stalled 50S ribosomal subunits, and thus maintains levels of free tRNAs and 50S ribosomes. The sequence is that of Peptidyl-tRNA hydrolase from Dehalococcoides mccartyi (strain ATCC BAA-2266 / KCTC 15142 / 195) (Dehalococcoides ethenogenes (strain 195)).